Consider the following 300-residue polypeptide: Manganese-binding lipoprotein MntA (300 aa).

A signal peptide spans 1-19 (MKKVCFSFVIMVIALIAAG). Cys20 carries N-palmitoyl cysteine lipidation. Residue Cys20 is the site of S-diacylglycerol cysteine attachment. Residues His68, His130, Glu196, and Asp271 each coordinate Mn(2+).

Belongs to the bacterial solute-binding protein 9 family.

The protein resides in the cell membrane. Its function is as follows. Probably part of ATP-binding cassette (ABC) transport system MntABCD involved in manganese import. Binds manganese and delivers it to the membrane permease for translocation into the cytoplasm. This Halalkalibacterium halodurans (strain ATCC BAA-125 / DSM 18197 / FERM 7344 / JCM 9153 / C-125) (Bacillus halodurans) protein is Manganese-binding lipoprotein MntA (mntA).